Reading from the N-terminus, the 156-residue chain is MYESENASEHHPELEDVFSENTGDSNPSMGSSDSTRSISGMRARDLITDTDVNLLNIDALESKYFPADSTFTLSVWFENLIPPEIEAILPTTDAQLNYISFTSRLASVLKHKESNDSEKSAYVVPCEHSASVTRRRERFAGVMAKFLDLHEILKDA.

The disordered stretch occupies residues 1–37 (MYESENASEHHPELEDVFSENTGDSNPSMGSSDSTRS). Residues 19-37 (SENTGDSNPSMGSSDSTRS) are compositionally biased toward polar residues.

Belongs to the herpesviridae TRM2 protein family. In terms of assembly, associates with TRM1 and TRM3 to form the tripartite terminase complex.

The protein resides in the host nucleus. Its function is as follows. Component of the molecular motor that translocates viral genomic DNA in empty capsid during DNA packaging. Forms a tripartite terminase complex together with TRM1 and TRM3 in the host cytoplasm. Once the complex reaches the host nucleus, it interacts with the capsid portal vertex. This portal forms a ring in which genomic DNA is translocated into the capsid. The chain is Tripartite terminase subunit 2 from Varicella-zoster virus (strain Dumas) (HHV-3).